Here is a 311-residue protein sequence, read N- to C-terminus: MARRELGPAALAVAQAVERMVRGVDRFVVGCSGGPDSLALALASKWASRRCESGVRVVIVDHQLQQGSDEVAERTRDLLVRRGMDACVRRVDVDADDPDGPEAAARTARRAALLDVAGDEPVLLGHTRDDQAEQVLLSLARGSGATSLAGIRPRSGQFWHPLLEVRRAQTVQACREWEVEPWQDPHNGDPRFLRSRVRTELMPVMEEVLGPEVAASLARSATLLAGEDEVVARVARMWADEHGVKANELPGLRGVEVGLARRVVKEWLPQARMVHVDAVLGLLDGPGGAGVDVPGGRVEMRQGTLYLARRL.

32-37 (SGGPDS) is an ATP binding site.

Belongs to the tRNA(Ile)-lysidine synthase family.

The protein resides in the cytoplasm. The enzyme catalyses cytidine(34) in tRNA(Ile2) + L-lysine + ATP = lysidine(34) in tRNA(Ile2) + AMP + diphosphate + H(+). Ligates lysine onto the cytidine present at position 34 of the AUA codon-specific tRNA(Ile) that contains the anticodon CAU, in an ATP-dependent manner. Cytidine is converted to lysidine, thus changing the amino acid specificity of the tRNA from methionine to isoleucine. The protein is tRNA(Ile)-lysidine synthase of Cutibacterium acnes (strain DSM 16379 / KPA171202) (Propionibacterium acnes).